A 471-amino-acid chain; its full sequence is MSIQIFNTLKREKQPFKPLKDGEVKMYVCGPTVYNYIHIGNARPIIVFDTVRRYFTYRGYDVKFVSNFTDVDDKLIRAANELKLTVPEVADRFIGAYFDDVDQLNVAKASVNPRVTENMDEIIQMISTLIEKGYAYESAGDVYFQTKKFKDYGKLSGQELSELQHGARVEYNERKQDELDFTLWKAAKPGEIFWESPFGNGRPGWHIECSALAKKYLGDTIDIHAGGQDLVFPHHEDEIAQSEAATGKTFANYWMHNAFLNIDGEKMSKSLGNFITLHDVLKDNDPNVIRFFMLSVHYRKPITLNDAILEDAKNGLERLMIAYQNIDHRIQTDDGEYVEEAHEDEWLEQLTELKQAFEDDMDDDFNTANAITTFHELAKRANIYLAKETVSINVLREFLSMMRLFAEVLGLKLENTQTDSLDDSEVEALIEERLQARNERNFARADEIRDILKEKNIILEDTAQGTRFRRG.

Position 29 (Cys29) interacts with Zn(2+). A 'HIGH' region motif is present at residues 31-41 (PTVYNYIHIGN). Positions 209, 234, and 238 each coordinate Zn(2+). A 'KMSKS' region motif is present at residues 266–270 (KMSKS). Lys269 contributes to the ATP binding site.

It belongs to the class-I aminoacyl-tRNA synthetase family. In terms of assembly, monomer. The cofactor is Zn(2+).

Its subcellular location is the cytoplasm. The catalysed reaction is tRNA(Cys) + L-cysteine + ATP = L-cysteinyl-tRNA(Cys) + AMP + diphosphate. This is Cysteine--tRNA ligase from Listeria monocytogenes serovar 1/2a (strain ATCC BAA-679 / EGD-e).